A 105-amino-acid polypeptide reads, in one-letter code: Large ribosomal subunit protein uL24 (105 aa).

It belongs to the universal ribosomal protein uL24 family. As to quaternary structure, part of the 50S ribosomal subunit.

In terms of biological role, one of two assembly initiator proteins, it binds directly to the 5'-end of the 23S rRNA, where it nucleates assembly of the 50S subunit. Functionally, one of the proteins that surrounds the polypeptide exit tunnel on the outside of the subunit. This chain is Large ribosomal subunit protein uL24, found in Wolbachia pipientis wMel.